The primary structure comprises 37 residues: M-oxotoxin-Ot2c (37 aa).

In terms of tissue distribution, expressed by the venom gland.

The protein resides in the secreted. Functionally, disrupts biological membranes, particularly those rich in phosphocholine. Has antimicrobial activity against Gram-negative bacterium E.coli, Gram-positive bacteria B.subtilis and S.aureus, and hemolytic activity against sheep, pig and guinea pig red blood cells. Has insecticidal activity against S.frugiperda ovarian cells by opening non-selective ion channels. Enhances the insecticidal activity of spider venom neurotoxic peptides. This is M-oxotoxin-Ot2c from Oxyopes takobius (Lynx spider).